The chain runs to 283 residues: Elongation factor Ts (283 aa).

The tract at residues 80-83 is involved in Mg(2+) ion dislocation from EF-Tu; it reads TDFV.

The protein belongs to the EF-Ts family.

It is found in the cytoplasm. Its function is as follows. Associates with the EF-Tu.GDP complex and induces the exchange of GDP to GTP. It remains bound to the aminoacyl-tRNA.EF-Tu.GTP complex up to the GTP hydrolysis stage on the ribosome. The polypeptide is Elongation factor Ts (Pectobacterium atrosepticum (strain SCRI 1043 / ATCC BAA-672) (Erwinia carotovora subsp. atroseptica)).